The primary structure comprises 78 residues: Defensin-like protein 173 (78 aa).

A signal peptide spans 1–23 (MAKAPSPLVFPIIFLIIFALVEP). 4 disulfides stabilise this stretch: cysteine 27–cysteine 71, cysteine 34–cysteine 56, cysteine 40–cysteine 65, and cysteine 44–cysteine 67.

The protein belongs to the DEFL family.

The protein resides in the secreted. This chain is Defensin-like protein 173 (LCR63), found in Arabidopsis thaliana (Mouse-ear cress).